Here is a 426-residue protein sequence, read N- to C-terminus: MLPLIIFVLLCGFYTSWNIGANDVANAVGPSVGSGVLTLRQAVVIAAIFEFFGALLLGDRVAGTIESSIVSVTNPMIASGDYMYGMTAALLATGVWLQLASFFGWPVSTTHSIVGAVIGFGLVLGKGTIIYWNSVGIILISWILSPFMGGCVAYLIFSFIRRHIFYKNDPVLAMVRVAPFLAALVIMTLGTVMISGGVILKVSSTPWAVSGVLVCGLLSYIITFYYVHTKHCSYISDTPKKGSLTYRLKERGGNYGRKYLVVERIFAYLQIIVACFMAFAHGSNDVANAIAPVAGVLRQAYPASYTSYTLIRLMAFGGIGLVIGLAIWGWRVIETVGCKITELTPSRGFSVGMGSALTIALASILGLPISTTHVVVGAVLGIGLARGIRAINLNIIKDIVLSWFITLPAGALLSILFFFALRALFH.

11 helical membrane-spanning segments follow: residues 1-21 (MLPL…NIGA), 42-62 (AVVI…DRVA), 87-107 (TAAL…GWPV), 112-132 (SIVG…IIYW), 137-157 (IILI…YLIF), 180-200 (FLAA…GVIL), 207-227 (WAVS…FYYV), 260-280 (LVVE…MAFA), 313-333 (LMAF…WRVI), 364-384 (ILGL…GIGL), and 399-419 (IVLS…LFFF).

It belongs to the inorganic phosphate transporter (PiT) (TC 2.A.20) family.

It is found in the cell membrane. Its function is as follows. Potential transporter for phosphate. The protein is Putative phosphate permease CPn_0680/CP_0067/CPj0680/CpB0707 of Chlamydia pneumoniae (Chlamydophila pneumoniae).